The following is a 566-amino-acid chain: DNA ligase B (566 aa).

Lys-125 (N6-AMP-lysine intermediate) is an active-site residue.

The protein belongs to the NAD-dependent DNA ligase family. LigB subfamily.

It catalyses the reaction NAD(+) + (deoxyribonucleotide)n-3'-hydroxyl + 5'-phospho-(deoxyribonucleotide)m = (deoxyribonucleotide)n+m + AMP + beta-nicotinamide D-nucleotide.. Functionally, catalyzes the formation of phosphodiester linkages between 5'-phosphoryl and 3'-hydroxyl groups in double-stranded DNA using NAD as a coenzyme and as the energy source for the reaction. The protein is DNA ligase B of Pseudomonas putida (strain GB-1).